The primary structure comprises 571 residues: uncharacterized protein (571 aa).

11 consecutive transmembrane segments (helical) span residues 5–27 (VILN…GYLV), 34–56 (TFVL…LNIT), 61–79 (IGSL…QGGA), 92–114 (LLAS…AWIF), 161–183 (TVGY…ATIF), 391–408 (FIFF…GLIS), 412–434 (FGIS…FGWI), 455–474 (LGLA…QAIT), 484–506 (FFLG…YYLL), 513–532 (VLLA…AALL), and 547–569 (SYAL…VTII).

The protein belongs to the AAE transporter (TC 2.A.81) family.

Its subcellular location is the cell membrane. This is an uncharacterized protein from Francisella tularensis subsp. tularensis (strain SCHU S4 / Schu 4).